The primary structure comprises 154 residues: Style cell-cycle inhibitor 1-A (154 aa).

Basic and acidic residues-rich tracts occupy residues 1-11 (MGSDKKTPEEK) and 24-48 (DEVK…DKSK). The interval 1–84 (MGSDKKTPEE…DKSKNKFEEL (84 aa)) is disordered. Positions 63–77 (GEKHKTKSHKHKDKS) are enriched in basic residues.

As to expression, specifically expressed in flowers pistils, especially in stigmas and styles. Barely detected in roots, stems, leaves, sepals, petals and stamen.

Its subcellular location is the nucleus. Its function is as follows. Component of the auxin signaling transduction pathway that regulates cell proliferation and differentiation during flowers stigmas and styles development. Involved in the regulation of auxin-related genes. In Nicotiana tabacum (Common tobacco), this protein is Style cell-cycle inhibitor 1-A.